The primary structure comprises 113 residues: Iron-sulfur cluster insertion protein ErpA (113 aa).

Positions 41, 105, and 107 each coordinate iron-sulfur cluster.

It belongs to the HesB/IscA family. As to quaternary structure, homodimer. It depends on iron-sulfur cluster as a cofactor.

Functionally, required for insertion of 4Fe-4S clusters for at least IspG. The polypeptide is Iron-sulfur cluster insertion protein ErpA (Photobacterium profundum (strain SS9)).